We begin with the raw amino-acid sequence, 520 residues long: Probable bifunctional tRNA threonylcarbamoyladenosine biosynthesis protein (520 aa).

Positions 1 to 318 are kae1; sequence MKIGPVLGIE…YRADQVLVTW (318 aa). Positions 105, 109, and 126 each coordinate Fe cation. L-threonylcarbamoyladenylate contacts are provided by residues 126-130, Asp158, Gly171, Glu175, and Asn251; that span reads YASGA. A Fe cation-binding site is contributed by Asp279. One can recognise a Protein kinase domain in the interval 327–520; the sequence is RHPDAYSARG…HEIELRGRYL (194 aa). Residues 333–341 and Lys350 each bind ATP; that span reads SARGAEAIV. Residue Asp437 is the Proton acceptor; for kinase activity of the active site.

It in the N-terminal section; belongs to the KAE1 / TsaD family. This sequence in the C-terminal section; belongs to the protein kinase superfamily. Tyr protein kinase family. BUD32 subfamily. In terms of assembly, component of the KEOPS complex that consists of Kae1, Bud32, Cgi121 and Pcc1; the whole complex dimerizes. Fe(2+) is required as a cofactor.

The protein localises to the cytoplasm. It carries out the reaction L-seryl-[protein] + ATP = O-phospho-L-seryl-[protein] + ADP + H(+). The enzyme catalyses L-threonyl-[protein] + ATP = O-phospho-L-threonyl-[protein] + ADP + H(+). It catalyses the reaction L-threonylcarbamoyladenylate + adenosine(37) in tRNA = N(6)-L-threonylcarbamoyladenosine(37) in tRNA + AMP + H(+). In terms of biological role, required for the formation of a threonylcarbamoyl group on adenosine at position 37 (t(6)A37) in tRNAs that read codons beginning with adenine. Is a component of the KEOPS complex that is probably involved in the transfer of the threonylcarbamoyl moiety of threonylcarbamoyl-AMP (TC-AMP) to the N6 group of A37. The Kae1 domain likely plays a direct catalytic role in this reaction. The Bud32 domain probably displays kinase activity that regulates Kae1 function. This chain is Probable bifunctional tRNA threonylcarbamoyladenosine biosynthesis protein, found in Methanospirillum hungatei JF-1 (strain ATCC 27890 / DSM 864 / NBRC 100397 / JF-1).